A 256-amino-acid polypeptide reads, in one-letter code: Ribonuclease HII (256 aa).

Residues 73-256 (KLIAGIDEAG…RVSFTKNFIV (184 aa)) enclose the RNase H type-2 domain. A divalent metal cation contacts are provided by aspartate 79, glutamate 80, and aspartate 171.

This sequence belongs to the RNase HII family. Requires Mn(2+) as cofactor. It depends on Mg(2+) as a cofactor.

The protein localises to the cytoplasm. The enzyme catalyses Endonucleolytic cleavage to 5'-phosphomonoester.. Functionally, endonuclease that specifically degrades the RNA of RNA-DNA hybrids. The protein is Ribonuclease HII of Acetivibrio thermocellus (strain ATCC 27405 / DSM 1237 / JCM 9322 / NBRC 103400 / NCIMB 10682 / NRRL B-4536 / VPI 7372) (Clostridium thermocellum).